Reading from the N-terminus, the 507-residue chain is 3-octaprenyl-4-hydroxybenzoate carboxy-lyase (507 aa).

Asn177 serves as a coordination point for Mn(2+). Prenylated FMN contacts are provided by residues 180-182, 194-196, and 199-200; these read IYR, RWL, and RG. Glu243 contacts Mn(2+). Asp302 (proton donor) is an active-site residue.

The protein belongs to the UbiD family. As to quaternary structure, homohexamer. Prenylated FMN is required as a cofactor. Requires Mn(2+) as cofactor.

Its subcellular location is the cell membrane. It carries out the reaction a 4-hydroxy-3-(all-trans-polyprenyl)benzoate + H(+) = a 2-(all-trans-polyprenyl)phenol + CO2. Its pathway is cofactor biosynthesis; ubiquinone biosynthesis. Functionally, catalyzes the decarboxylation of 3-octaprenyl-4-hydroxy benzoate to 2-octaprenylphenol, an intermediate step in ubiquinone biosynthesis. The protein is 3-octaprenyl-4-hydroxybenzoate carboxy-lyase of Cupriavidus metallidurans (strain ATCC 43123 / DSM 2839 / NBRC 102507 / CH34) (Ralstonia metallidurans).